A 250-amino-acid chain; its full sequence is MGKKITKQDRESQISNICNDKNLSFVGWIGEYTNIKSTLTLKCNKCYYTWSPRLDNFLRITAQKCPACAGKARWTKEEREEQIKSKCAEKGYNFLSWSSTYINKDSKIILKCLKDGCIWDVSIHHFINHDTGCPDCASGGFNPNIPATFYIQKLTYQGTHFLKFGITGKDVLERMRQQSNKSLCEHSVIFSHTFSYGSMARGLEKVVKDSVNTGVLDKRILPDGYTETCHYSELETILSLTNSFIQENIR.

In terms of biological role, putative endonuclease. This chain is Putative endonuclease, found in Escherichia coli (Enterobacteria phage T5).